Reading from the N-terminus, the 274-residue chain is MGAVNIPTWARHSFATVLILLLLAFSLILPVDVIRRVSQMPHEILNTAIIVGAAITLLITFTSLSFGRLLVHRSCMQDIPKRYVPITERDLPNTRIRGEIYHKLEHCKQLAHDFSTPETRVVHAGLEPPAHVDHCGDDMLPPLLDYQACVKIIADRFKFQGILLNKYMLEPKLGMTFAAQLRRTVSENDCVDRNQLEEFITLYETIRYSGHPVTRGKFIRFMELCLLLVDFSLLTHRVDTPPSGEPSSTTDSATNFNAHVLYSRTEESISQSSA.

Residues 1 to 13 (MGAVNIPTWARHS) lie on the Cytoplasmic side of the membrane. The chain crosses the membrane as a helical span at residues 14–34 (FATVLILLLLAFSLILPVDVI). Topologically, residues 35–43 (RRVSQMPHE) are extracellular. Residues 44-64 (ILNTAIIVGAAITLLITFTSL) form a helical membrane-spanning segment. Topologically, residues 65–274 (SFGRLLVHRS…TEESISQSSA (210 aa)) are cytoplasmic.

Belongs to the DLT1 family.

The protein localises to the membrane. Functionally, required for growth under high-pressure and low-temperature conditions. The chain is Defect at low temperature protein 1 (DLT1) from Eremothecium gossypii (strain ATCC 10895 / CBS 109.51 / FGSC 9923 / NRRL Y-1056) (Yeast).